A 280-amino-acid polypeptide reads, in one-letter code: uncharacterized protein (280 aa).

An N-terminal signal peptide occupies residues 1–35 (MQGQVLKKVLKKYVHIGMCTLFLHAILLFPCVAQA).

This is an uncharacterized protein from Treponema pallidum (strain Nichols).